The primary structure comprises 437 residues: Serine--tRNA ligase (437 aa).

Residue 240–242 participates in L-serine binding; that stretch reads TAE. Residue 271-273 participates in ATP binding; that stretch reads RAE. L-serine is bound at residue Glu-294. 358-361 provides a ligand contact to ATP; that stretch reads EISS. Ser-394 lines the L-serine pocket.

Belongs to the class-II aminoacyl-tRNA synthetase family. Type-1 seryl-tRNA synthetase subfamily. In terms of assembly, homodimer. The tRNA molecule binds across the dimer.

Its subcellular location is the cytoplasm. It carries out the reaction tRNA(Ser) + L-serine + ATP = L-seryl-tRNA(Ser) + AMP + diphosphate + H(+). It catalyses the reaction tRNA(Sec) + L-serine + ATP = L-seryl-tRNA(Sec) + AMP + diphosphate + H(+). It participates in aminoacyl-tRNA biosynthesis; selenocysteinyl-tRNA(Sec) biosynthesis; L-seryl-tRNA(Sec) from L-serine and tRNA(Sec): step 1/1. Functionally, catalyzes the attachment of serine to tRNA(Ser). Is also able to aminoacylate tRNA(Sec) with serine, to form the misacylated tRNA L-seryl-tRNA(Sec), which will be further converted into selenocysteinyl-tRNA(Sec). This chain is Serine--tRNA ligase, found in Methylobacterium nodulans (strain LMG 21967 / CNCM I-2342 / ORS 2060).